Reading from the N-terminus, the 233-residue chain is Uridylate kinase (233 aa).

Residue 9–10 (GS) coordinates ATP. G43 lines the UMP pocket. Positions 44 and 48 each coordinate ATP. Residues D65 and 113-119 (VTPGQTT) each bind UMP. 3 residues coordinate ATP: T139, Y145, and D148.

This sequence belongs to the UMP kinase family. Homohexamer.

Its subcellular location is the cytoplasm. The catalysed reaction is UMP + ATP = UDP + ADP. The protein operates within pyrimidine metabolism; CTP biosynthesis via de novo pathway; UDP from UMP (UMPK route): step 1/1. Its activity is regulated as follows. Inhibited by UTP. In terms of biological role, catalyzes the reversible phosphorylation of UMP to UDP. The protein is Uridylate kinase of Methanosarcina mazei (strain ATCC BAA-159 / DSM 3647 / Goe1 / Go1 / JCM 11833 / OCM 88) (Methanosarcina frisia).